Here is a 557-residue protein sequence, read N- to C-terminus: Vanadium-dependent bromoperoxidase (557 aa).

Q1 bears the Pyrrolidone carboxylic acid mark. The disordered stretch occupies residues 1–22; it reads QTCSTSDDADDPTPPNERDDEA. A disulfide bridge links C77 with C86. K341 and R349 together coordinate vanadate. Residue H411 is part of the active site. The vanadate site is built by S416, G417, and H418. H418 is an active-site residue. Residues C441 and C462 are joined by a disulfide bond. Vanadate-binding residues include R480 and H486. A disulfide bridge connects residues C544 and C555.

This sequence belongs to the vanadium-dependent haloperoxidase family. As to quaternary structure, homodimer; disulfide-linked. The cofactor is vanadate.

The catalysed reaction is RH + Br(-) + H2O2 = RBr + 2 H2O.. Its function is as follows. Catalyzes the halogenation of organic substrates in the presence of hydrogen peroxide. The sequence is that of Vanadium-dependent bromoperoxidase from Ascophyllum nodosum (Knotted wrack).